We begin with the raw amino-acid sequence, 432 residues long: Trigger factor (432 aa).

The PPIase FKBP-type domain occupies 161-246 (DDRVTIDFVG…LKKIENMVLP (86 aa)).

This sequence belongs to the FKBP-type PPIase family. Tig subfamily.

The protein localises to the cytoplasm. The enzyme catalyses [protein]-peptidylproline (omega=180) = [protein]-peptidylproline (omega=0). Involved in protein export. Acts as a chaperone by maintaining the newly synthesized protein in an open conformation. Functions as a peptidyl-prolyl cis-trans isomerase. The chain is Trigger factor from Haemophilus influenzae (strain PittEE).